Reading from the N-terminus, the 158-residue chain is Glutathione peroxidase-like peroxiredoxin gpx1 (158 aa).

Catalysis depends on C36, which acts as the Cysteine sulfenic acid (-SOH) intermediate. A disulfide bridge connects residues C36 and C82.

Belongs to the glutathione peroxidase family. In terms of assembly, monomer.

It localises to the cytoplasm. The protein resides in the mitochondrion. The enzyme catalyses a hydroperoxide + [thioredoxin]-dithiol = an alcohol + [thioredoxin]-disulfide + H2O. Its function is as follows. Glutathione peroxidase-like protein that protects cells during oxidative stress. Has peroxidase activity reducing hydrogen peroxide, alkyl and phospholipid hydroperoxides using preferentially thioredoxin as a reducing power. May act as a scavenger of H(2)O(2). The sequence is that of Glutathione peroxidase-like peroxiredoxin gpx1 from Schizosaccharomyces pombe (strain 972 / ATCC 24843) (Fission yeast).